We begin with the raw amino-acid sequence, 371 residues long: Vasopressin V2 receptor (371 aa).

Positions 1-27 (MILVSTTSAVPGALSSPSSPSNSSQEE) are disordered. The Extracellular segment spans residues 1–38 (MILVSTTSAVPGALSSPSSPSNSSQEELLDDRDPLLVR). Positions 15–24 (SSPSSPSNSS) are enriched in low complexity. N-linked (GlcNAc...) asparagine glycosylation is present at N22. The helical transmembrane segment at 39-63 (AELALLSTIFVAVALSNGLVLGALI) threads the bilayer. At 64–77 (RRGRRGRWAPMHVF) the chain is on the cytoplasmic side. A helical transmembrane segment spans residues 78-98 (ISHLCLADLAVALFQVLPQLA). Residues 99-113 (WDATDRFHGPDALCR) are Extracellular-facing. The chain crosses the membrane as a helical span at residues 114 to 135 (AVKYLQMVGMYASSYMILAMTL). At 136-159 (DRHRAICRPMLAYRHGGGARWNRP) the chain is on the cytoplasmic side. A helical transmembrane segment spans residues 160 to 180 (VLVAWAFSLLLSLPQLFIFAQ). Residues 181 to 200 (RDVGNGSGVFDCWARFAEPW) are Extracellular-facing. N185 carries N-linked (GlcNAc...) asparagine glycosylation. A helical membrane pass occupies residues 201-220 (GLRAYVTWIALMVFVAPALG). Residues 221–271 (IAACQVLIFREIHASLVPGPSERAGRRRRGHRTGSPSEGAHVSAAMAKTVR) lie on the Cytoplasmic side of the membrane. A disordered region spans residues 240 to 259 (PSERAGRRRRGHRTGSPSEG). The chain crosses the membrane as a helical span at residues 272–293 (MTLVIVIVYVLCWAPFFLVQLW). The Extracellular portion of the chain corresponds to 294 to 308 (AAWDPEAPLERPPFV). Residues 309-328 (LLMLLASLNSCTNPWIYASF) form a helical membrane-spanning segment. At 329 to 371 (SSSVSSELRSLLCCAQRHTTHSLGPQDESCATASSSLMKDTPS) the chain is on the cytoplasmic side. Residues C341 and C342 are each lipidated (S-palmitoyl cysteine). The tract at residues 349–371 (HSLGPQDESCATASSSLMKDTPS) is disordered. Residues 357 to 371 (SCATASSSLMKDTPS) are compositionally biased toward polar residues.

Belongs to the G-protein coupled receptor 1 family. Vasopressin/oxytocin receptor subfamily. Interacts with ARRDC4. Identified in a complex containing at least ARRDC4, V2R and HGS. Interacts with TMEM147. As to expression, highly expressed in kidney (at protein level) and moderately expressed in liver (at protein level). No or extremely low expression in left ventricule, muscle, bone and brain (at protein level).

It localises to the cell membrane. Its function is as follows. Receptor for arginine vasopressin. The activity of this receptor is mediated by G proteins which activate adenylate cyclase. Involved in renal water reabsorption. The protein is Vasopressin V2 receptor (Avpr2) of Mus musculus (Mouse).